We begin with the raw amino-acid sequence, 195 residues long: Glycerol-3-phosphate acyltransferase (195 aa).

5 helical membrane passes run 3–23 (EAAL…YFFT), 51–71 (GVAL…AWIG), 79–99 (LLVI…FLGF), 111–131 (IILF…LAIV), and 153–173 (LAMG…ALVV).

This sequence belongs to the PlsY family. As to quaternary structure, probably interacts with PlsX.

Its subcellular location is the cell membrane. The catalysed reaction is an acyl phosphate + sn-glycerol 3-phosphate = a 1-acyl-sn-glycero-3-phosphate + phosphate. It functions in the pathway lipid metabolism; phospholipid metabolism. In terms of biological role, catalyzes the transfer of an acyl group from acyl-phosphate (acyl-PO(4)) to glycerol-3-phosphate (G3P) to form lysophosphatidic acid (LPA). This enzyme utilizes acyl-phosphate as fatty acyl donor, but not acyl-CoA or acyl-ACP. The protein is Glycerol-3-phosphate acyltransferase of Syntrophomonas wolfei subsp. wolfei (strain DSM 2245B / Goettingen).